The chain runs to 469 residues: Regulator of G-protein signaling 7 (469 aa).

The DEP domain occupies 37 to 112; it reads EKNGIPIRTV…DDGTFYRFQT (76 aa). 2 positions are modified to phosphoserine: Ser-229 and Ser-241. The segment at 236–255 is disordered; the sequence is DIRSHSPTHTPTPETKPPTE. Thr-243 is subject to Phosphothreonine. The G protein gamma domain maps to 255 to 316; it reads EDELHQQIKY…LSDDTTFWEL (62 aa). Residues 333–448 enclose the RGS domain; sequence GMDEALKDPV…IRSSAYQELL (116 aa). Phosphoserine is present on Ser-434.

Interacts with GNB5, forming the RGS7-GNB5 complex. Interacts with GPR158; promotes the GTPase activator activity of the RGS7-GNB5 complex in absence of glycine, in contrast GTPase activator activity of the RGS7-GNB5 complex is inhibited in presence of glycine. Interacts with GPR179. Interacts with PKD1; this prevents rapid proteasomal degradation. Interacts with RGS7BP, leading to regulate the subcellular location of the heterodimer formed with GNB5. Interacts (phosphorylated form) with 14-3-3 protein YWHAQ. Interacts with SNAPIN. Interacts with GNAI1. Interacts with GNAO1, GNAI3 and GNAZ. Palmitoylated. In terms of processing, ubiquitinated, leading to rapid proteasomal degradation. Post-translationally, phosphorylation and subsequent interaction with 14-3-3 proteins inhibits GAP activity. Detected in brain (at protein level).

Its subcellular location is the cytoplasm. The protein resides in the cytosol. It localises to the cell membrane. The protein localises to the membrane. Functionally, GTPase activator component of the RGS7-GNB5 complex that regulates G protein-coupled receptor signaling cascades. The RGS7-GNB5 complex acts as an inhibitor signal transduction by promoting the GTPase activity of G protein alpha subunits, such as GNAO1, thereby driving them into their inactive GDP-bound form. May play a role in synaptic vesicle exocytosis. Glycine-dependent regulation of the RGS7-GNB5 complex by GPR158 affects mood and cognition via its ability to regulate neuronal excitability in L2/L3 pyramidal neurons of the prefrontal cortex. Modulates the activity of potassium channels that are activated by GNAO1 in response to muscarinic acetylcholine receptor M2/CHRM2 signaling. This chain is Regulator of G-protein signaling 7 (Rgs7), found in Mus musculus (Mouse).